The primary structure comprises 962 residues: Glycine dehydrogenase (decarboxylating) (962 aa).

The residue at position 709 (K709) is an N6-(pyridoxal phosphate)lysine.

It belongs to the GcvP family. As to quaternary structure, the glycine cleavage system is composed of four proteins: P, T, L and H. Requires pyridoxal 5'-phosphate as cofactor.

It catalyses the reaction N(6)-[(R)-lipoyl]-L-lysyl-[glycine-cleavage complex H protein] + glycine + H(+) = N(6)-[(R)-S(8)-aminomethyldihydrolipoyl]-L-lysyl-[glycine-cleavage complex H protein] + CO2. Functionally, the glycine cleavage system catalyzes the degradation of glycine. The P protein binds the alpha-amino group of glycine through its pyridoxal phosphate cofactor; CO(2) is released and the remaining methylamine moiety is then transferred to the lipoamide cofactor of the H protein. The sequence is that of Glycine dehydrogenase (decarboxylating) from Shewanella baltica (strain OS155 / ATCC BAA-1091).